Here is a 300-residue protein sequence, read N- to C-terminus: Free fatty acid receptor 1 (300 aa).

Residues 1–8 (MDLPPQLS) are Extracellular-facing. A helical transmembrane segment spans residues 9–31 (FALYVSAFALGFPLNLLAIRGAV). Topologically, residues 32-41 (SHAKLRLTPS) are cytoplasmic. Residues 42–64 (LVYTLHLACSDLLLAITLPLKAV) form a helical membrane-spanning segment. At 65–79 (EALASGVWPLPLPFC) the chain is on the extracellular side. C79 and C170 are disulfide-bonded. Residues 80–101 (PVFALAHFAPLYAGGGFLAALS) traverse the membrane as a helical segment. Residues 102-121 (AGRYLGAAFPFGYQAIRRPC) are Cytoplasmic-facing. The chain crosses the membrane as a helical span at residues 122-142 (YSWGVCVAIWALVLCHLGLAL). The Extracellular portion of the chain corresponds to 143-178 (GLEAPRGWVDNTTSSLGINIPVNGSPVCLEAWDPDS). N153 carries an N-linked (GlcNAc...) asparagine glycan. A helical transmembrane segment spans residues 179-200 (ARPARLSFSILLFFLPLVITAF). Topologically, residues 201 to 223 (CYVGCLRALVHSGLSHKRKLRAA) are cytoplasmic. The chain crosses the membrane as a helical span at residues 224 to 248 (WVAGGALLTLLLCLGPYNASNVASF). Residues 249-256 (INPDLEGS) lie on the Extracellular side of the membrane. The helical transmembrane segment at 257-279 (WRKLGLITGAWSVVLNPLVTGYL) threads the bilayer. Over 280–300 (GTGPGQGTICVTRTPRGTIQK) the chain is Cytoplasmic.

Belongs to the G-protein coupled receptor 1 family. As to expression, expressed abundantly in pancreatic beta cells.

It localises to the cell membrane. Its function is as follows. G-protein coupled receptor for medium and long chain saturated and unsaturated fatty acids that plays an important role in glucose homeostasis. Fatty acid binding increases glucose-stimulated insulin secretion, and may also enhance the secretion of glucagon-like peptide 1 (GLP-1). May also play a role in bone homeostasis; receptor signaling activates pathways that inhibit osteoclast differentiation. Ligand binding leads to a conformation change that triggers signaling via G-proteins that activate phospholipase C, leading to an increase of the intracellular calcium concentration. Seems to act through a G(q) and G(i)-mediated pathway. Mediates the anti-inflammatory effects of omega-3 polyunsaturated fatty acids (PUFAs) via inhibition of NLRP3 inflammasome activation. The sequence is that of Free fatty acid receptor 1 (Ffar1) from Rattus norvegicus (Rat).